Here is a 920-residue protein sequence, read N- to C-terminus: MADHSASGAPALSTNIESGKFDEKAAEAAAYQPKPKVEDDEDEDIDALIEDLESHDGHDAEEEEEEATPGGGRVVPEDMLQTDTRVGLTSEEVVQRRRKYGLNQMKEEKENHFLKFLGFFVGPIQFVMEGAAVLAAGLEDWVDFGVICGLLLLNAVVGFVQEFQAGSIVDELKKTLALKAVVLRDGTLKEIEAPEVVPGDILQVEEGTIIPADGRIVTDDAFLQVDQSALTGESLAVDKHKGDQVFASSAVKRGEAFVVITATGDNTFVGRAAALVNAASGGSGHFTEVLNGIGTILLILVIFTLLIVWVSSFYRSNPIVQILEFTLAITIIGVPVGLPAVVTTTMAVGAAYLAKKKAIVQKLSAIESLAGVEILCSDKTGTLTKNKLSLHDPYTVAGVDPEDLMLTACLAASRKKKGIDAIDKAFLKSLKYYPRAKSVLSKYKVLQFHPFDPVSKKVVAVVESPQGERITCVKGAPLFVLKTVEEDHPIPEEVDQAYKNKVAEFATRGFRSLGVARKRGEGSWEILGIMPCMDPPRHDTYKTVCEAKTLGLSIKMLTGDAVGIARETSRQLGLGTNIYNAERLGLGGGGDMPGSEVYDFVEAADGFAEVFPQHKYNVVEILQQRGYLVAMTGDGVNDAPSLKKADTGIAVEGSSDAARSAADIVFLAPGLGAIIDALKTSRQIFHRMYAYVVYRIALSIHLEIFLGLWIAILNRSLNIELVVFIAIFADVATLAIAYDNAPYSQTPVKWNLPKLWGMSVLLGVVLAVGTWITVTTMYAQGENGGIVQNFGNMDEVLFLQISLTENWLIFITRANGPFWSSIPSWQLSGAIFLVDILATCFTIWGWFEHSDTSIVAVVRIWIFSFGIFCIMGGVYYILQDSVGFDNLMHGKSPKGNQKQRSLEDFVVSLQRVSTQHEKSQ.

The disordered stretch occupies residues Met1 to Glu77. At Met1–Lys115 the chain is on the cytoplasmic side. Positions Glu38–Asp51 are enriched in acidic residues. The helical transmembrane segment at Phe116–Leu138 threads the bilayer. Topologically, residues Glu139–Asp140 are extracellular. Residues Trp141–Val160 form a helical membrane-spanning segment. The Cytoplasmic segment spans residues Gln161–Asn291. Residues Gly292–Tyr314 form a helical membrane-spanning segment. Residues Arg315–Gln321 lie on the Extracellular side of the membrane. The helical transmembrane segment at Ile322 to Ala354 threads the bilayer. Over Lys355–Arg687 the chain is Cytoplasmic. The active-site 4-aspartylphosphate intermediate is the Asp378. 2 residues coordinate Mg(2+): Asp634 and Asp638. The helical transmembrane segment at Met688 to Leu713 threads the bilayer. Residues Asn714–Glu720 lie on the Extracellular side of the membrane. The helical transmembrane segment at Leu721–Tyr738 threads the bilayer. Over Asp739–Lys754 the chain is Cytoplasmic. The helical transmembrane segment at Leu755–Ala779 threads the bilayer. At Gln780–Asn806 the chain is on the extracellular side. The next 2 membrane-spanning stretches (helical) occupy residues Trp807–Gln826 and Leu827–Phe847. Topologically, residues Glu848–Ser853 are extracellular. The chain crosses the membrane as a helical span at residues Ile854–Leu878. Residues Gln879–Gln920 are Cytoplasmic-facing.

The protein belongs to the cation transport ATPase (P-type) (TC 3.A.3) family. Type IIIA subfamily.

Its subcellular location is the cell membrane. The catalysed reaction is ATP + H2O + H(+)(in) = ADP + phosphate + 2 H(+)(out). In terms of biological role, the plasma membrane ATPase of plants and fungi is a hydrogen ion pump. The proton gradient it generates drives the active transport of nutrients by H(+)-symport. The resulting external acidification and/or internal alkinization may mediate growth responses. The chain is Plasma membrane ATPase (pma-1) from Neurospora crassa (strain ATCC 24698 / 74-OR23-1A / CBS 708.71 / DSM 1257 / FGSC 987).